Reading from the N-terminus, the 625-residue chain is Procollagen galactosyltransferase 2 (625 aa).

The N-terminal stretch at 1–26 is a signal peptide; sequence MAARLATVACALFLLSSALLRLGCRA. 4 N-linked (GlcNAc...) asparagine glycosylation sites follow: Asn96, Asn184, Asn381, and Asn579. Residues 597–625 are disordered; the sequence is QGHIRSTAKNTEALPPPTSLDTVPSRDEL. A Prevents secretion from ER motif is present at residues 622 to 625; it reads RDEL.

It belongs to the glycosyltransferase 25 family.

The protein localises to the endoplasmic reticulum lumen. The enzyme catalyses (5R)-5-hydroxy-L-lysyl-[collagen] + UDP-alpha-D-galactose = (5R)-5-O-(beta-D-galactosyl)-5-hydroxy-L-lysyl-[collagen] + UDP + H(+). Beta-galactosyltransferase that transfers beta-galactose to hydroxylysine residues of collagen. This Mus musculus (Mouse) protein is Procollagen galactosyltransferase 2 (Colgalt2).